The primary structure comprises 301 residues: Triplex capsid protein 2 (301 aa).

The protein belongs to the herpesviridae TRX2 protein family. In terms of assembly, interacts with TRX1 and major capisd protein/MCP.

Its subcellular location is the virion. It is found in the host nucleus. Its function is as follows. Structural component of the T=16 icosahedral capsid. The capsid is composed of pentamers and hexamers of major capsid protein/MCP, which are linked together by heterotrimers called triplexes. These triplexes are formed by a single molecule of triplex protein 1/TRX1 and two copies of triplex protein 2/TRX2. Additionally, TRX1 is required for efficient transport of TRX2 to the nucleus, which is the site of capsid assembly. The protein is Triplex capsid protein 2 of Homo sapiens (Human).